A 122-amino-acid polypeptide reads, in one-letter code: Fluoride-specific ion channel FluC (122 aa).

4 helical membrane passes run Met1 to Leu21, Phe34 to Ser54, Gly60 to Phe80, and Phe100 to Ile120.

Belongs to the fluoride channel Fluc/FEX (TC 1.A.43) family.

Its subcellular location is the cell inner membrane. The catalysed reaction is fluoride(in) = fluoride(out). Functionally, fluoride-specific ion channel. Important for reducing fluoride concentration in the cell, thus reducing its toxicity. In Campylobacter lari (strain RM2100 / D67 / ATCC BAA-1060), this protein is Fluoride-specific ion channel FluC.